The sequence spans 307 residues: HPr kinase/phosphorylase (307 aa).

Catalysis depends on residues H136 and K157. Position 151-158 (151-158) interacts with ATP; sequence GESGIGKS. S158 is a binding site for Mg(2+). Catalysis depends on D175, which acts as the Proton acceptor; for phosphorylation activity. Proton donor; for dephosphorylation activity. The tract at residues 198–207 is important for the catalytic mechanism of both phosphorylation and dephosphorylation; sequence LEVRGMGIID. Position 199 (E199) interacts with Mg(2+). The active site involves R240. The interval 261 to 266 is important for the catalytic mechanism of dephosphorylation; it reads PIRPGR.

It belongs to the HPrK/P family. In terms of assembly, homohexamer. The cofactor is Mg(2+).

It catalyses the reaction [HPr protein]-L-serine + ATP = [HPr protein]-O-phospho-L-serine + ADP + H(+). The enzyme catalyses [HPr protein]-O-phospho-L-serine + phosphate + H(+) = [HPr protein]-L-serine + diphosphate. Its function is as follows. Catalyzes the ATP- as well as the pyrophosphate-dependent phosphorylation of a specific serine residue in HPr, a phosphocarrier protein of the phosphoenolpyruvate-dependent sugar phosphotransferase system (PTS). HprK/P also catalyzes the pyrophosphate-producing, inorganic phosphate-dependent dephosphorylation (phosphorolysis) of seryl-phosphorylated HPr (P-Ser-HPr). The two antagonistic activities of HprK/P are regulated by several intracellular metabolites, which change their concentration in response to the absence or presence of rapidly metabolisable carbon sources (glucose, fructose, etc.) in the growth medium. Therefore, by controlling the phosphorylation state of HPr, HPrK/P is a sensor enzyme that plays a major role in the regulation of carbon metabolism and sugar transport: it mediates carbon catabolite repression (CCR), and regulates PTS-catalyzed carbohydrate uptake and inducer exclusion. This chain is HPr kinase/phosphorylase, found in Clostridium perfringens (strain 13 / Type A).